Consider the following 311-residue polypeptide: Cell division protein FtsQ (311 aa).

The tract at residues 1-28 is disordered; sequence MTTRSPARPLIARRSTPAPTPAPHDPAP. The Cytoplasmic portion of the chain corresponds to 1 to 46; it reads MTTRSPARPLIARRSTPAPTPAPHDPAPSRLSYRVTRLWLTPIFRK. Residues 47-67 traverse the membrane as a helical segment; that stretch reads ALHLGIPVFALFAAVTWYLGD. Residues 68–311 lie on the Periplasmic side of the membrane; sequence ETRVAELFEA…AERPDGDTRG (244 aa). The region spanning 91–159 is the POTRA domain; the sequence is FRVNVLGIDG…GYLAVRIDER (69 aa).

The protein belongs to the FtsQ/DivIB family. FtsQ subfamily.

It is found in the cell inner membrane. Its function is as follows. Essential cell division protein. The protein is Cell division protein FtsQ of Jannaschia sp. (strain CCS1).